Here is a 476-residue protein sequence, read N- to C-terminus: Angiotensinogen (476 aa).

The signal sequence occupies residues 1–24 (MAPAGLSLGAAILCLLAWAGLAAG). Cysteines 42 and 161 form a disulfide. N-linked (GlcNAc...) asparagine glycosylation is found at Asn-295, Asn-319, Asn-362, and Asn-401.

Belongs to the serpin family. In response to low blood pressure, the enzyme renin/REN cleaves angiotensinogen to produce angiotensin-1. Angiotensin-1 is a substrate of ACE (angiotensin converting enzyme) that removes a dipeptide to yield the physiologically active peptide angiotensin-2. Angiotensin-1 and angiotensin-2 can be further processed to generate angiotensin-3, angiotensin-4. Angiotensin 1-9 is cleaved from angiotensin-1 by ACE2 and can be further processed by ACE to produce angiotensin 1-7, angiotensin 1-5 and angiotensin 1-4. Angiotensin 1-7 has also been proposed to be cleaved from angiotensin-2 by ACE2 or from angiotensin-1 by MME (neprilysin). In terms of processing, the disulfide bond is labile. Angiotensinogen is present in the circulation in a near 40:60 ratio with the oxidized disulfide-bonded form, which preferentially interacts with receptor-bound renin.

It is found in the secreted. Functionally, essential component of the renin-angiotensin system (RAS), a potent regulator of blood pressure, body fluid and electrolyte homeostasis. Acts directly on vascular smooth muscle as a potent vasoconstrictor, affects cardiac contractility and heart rate through its action on the sympathetic nervous system, and alters renal sodium and water absorption through its ability to stimulate the zona glomerulosa cells of the adrenal cortex to synthesize and secrete aldosterone. Acts by binding to angiotensin receptors AGTR1 and AGTR2. Also binds the DEAR/FBXW7-AS1 receptor. In terms of biological role, stimulates aldosterone release. Its function is as follows. Is a ligand for the G-protein coupled receptor MAS1. Has vasodilator and antidiuretic effects. Has an antithrombotic effect that involves MAS1-mediated release of nitric oxide from platelets. The sequence is that of Angiotensinogen (AGT) from Bos taurus (Bovine).